Reading from the N-terminus, the 373-residue chain is GTPase-activating protein gyp10 (373 aa).

In terms of domain architecture, Rab-GAP TBC spans 35-220 (FLMKSLRKSV…RLFDFFISSH (186 aa)). A helical transmembrane segment spans residues 343 to 363 (IFNGCNMLAAITVIGIGIVAS).

Its subcellular location is the endoplasmic reticulum membrane. Its function is as follows. Has a role in vesicular trafficking and septation during cytokinesis. In Schizosaccharomyces pombe (strain 972 / ATCC 24843) (Fission yeast), this protein is GTPase-activating protein gyp10 (gyp10).